Reading from the N-terminus, the 471-residue chain is Protein translocase subunit SecF (471 aa).

Positions 1–29 (MVSRAKVGAETTKGIDEPDRNDNTDDNGA) are disordered. The segment covering 13 to 23 (KGIDEPDRNDN) has biased composition (basic and acidic residues). 6 consecutive transmembrane segments (helical) span residues 88-108 (GGVI…TFGI), 211-231 (ITKK…LYIT), 242-262 (ALTT…LVGF), 267-287 (ATVI…VIVF), 325-345 (LISV…LGVG), and 355-375 (LVGI…LLVT). The disordered stretch occupies residues 393–471 (RRTLGSQVGK…TGKRNNVGRR (79 aa)). Residues 415–431 (KPQNQAESCADASSQEG) show a composition bias toward polar residues. A compositionally biased stretch (low complexity) spans 448 to 460 (PGVRPVRPTGTRR). A compositionally biased stretch (basic residues) spans 461 to 471 (PTGKRNNVGRR).

The protein belongs to the SecD/SecF family. SecF subfamily. In terms of assembly, forms a complex with SecD. Part of the essential Sec protein translocation apparatus which comprises SecA, SecYEG and auxiliary proteins SecDF. Other proteins may also be involved.

The protein localises to the cell membrane. In terms of biological role, part of the Sec protein translocase complex. Interacts with the SecYEG preprotein conducting channel. SecDF uses the proton motive force (PMF) to complete protein translocation after the ATP-dependent function of SecA. The chain is Protein translocase subunit SecF from Mycobacterium leprae (strain TN).